The sequence spans 317 residues: Ribosomal RNA small subunit methyltransferase H (317 aa).

S-adenosyl-L-methionine-binding positions include 32–34 (GGH), Asp-51, Phe-78, Asp-99, and Gln-106.

It belongs to the methyltransferase superfamily. RsmH family.

The protein resides in the cytoplasm. The enzyme catalyses cytidine(1402) in 16S rRNA + S-adenosyl-L-methionine = N(4)-methylcytidine(1402) in 16S rRNA + S-adenosyl-L-homocysteine + H(+). Functionally, specifically methylates the N4 position of cytidine in position 1402 (C1402) of 16S rRNA. In Helicobacter hepaticus (strain ATCC 51449 / 3B1), this protein is Ribosomal RNA small subunit methyltransferase H.